The sequence spans 457 residues: Transcription factor CP2-like protein 1 (457 aa).

A mediate transcriptional repression region spans residues 1–52 (MLFWHTQPEHYNQHNSGSYLRDVLALPIFKQEEPQLSPENEARLPPLQYVLC). The Grh/CP2 DB domain maps to 43-280 (RLPPLQYVLC…PSPSYNGSPN (238 aa)). Disordered regions lie at residues 219–245 (KPKGADRKQETDREKMEKRTAQEKEKY) and 271–301 (PSPSYNGSPNSFGLGEGNASPTHPVEALPVG). A compositionally biased stretch (basic and acidic residues) spans 221-245 (KGADRKQETDREKMEKRTAQEKEKY). The tract at residues 261-365 (PDVAYQVNSA…IRLFNAIKGR (105 aa)) is SAM2-like domain. A compositionally biased stretch (polar residues) spans 271–281 (PSPSYNGSPNS).

The protein belongs to the grh/CP2 family. CP2 subfamily. In terms of assembly, forms homohexamers via its SAM-like domain. Interacts with MTA1; which is indispensable for TFCP2L1-mediated self-renewal-promoting effect and endoderm-inhibiting action.

The protein resides in the nucleus. Transcription factor that facilitates establishment and maintenance of pluripotency in embryonic stem cells (ESCs). With KLF2, acts as the major effector of self-renewal that mediates induction of pluripotency downstream of LIF/STAT3 and Wnt/beta-catenin signaling. Required for normal duct development in the salivary gland and kidney. Coordinates the development of the kidney collecting ducts intercalated (IC) and principal (PC) cells, which regulate acid-base and salt-water homeostasis, respectively. Regulates the expression of IC genes including subunits B1 and D2 of the V-ATPase complex, OXGR1, CA12, SLC4A1, AQP6 and IC-specific transcription factor FOXI1. Also regulates the expression of JAG1 and subsequent notch signaling in the collecting duct. JAG1 initiates notch signaling in PCs but inhibits notch signaling in ICs. Acts as a transcriptional suppressor that may suppress UBP1-mediated transcriptional activation. Modulates the placental expression of CYP11A1. The sequence is that of Transcription factor CP2-like protein 1 (TFCP2L1) from Pongo abelii (Sumatran orangutan).